Reading from the N-terminus, the 371-residue chain is Isopentenyl-diphosphate delta-isomerase (371 aa).

9-10 (RK) lines the substrate pocket. FMN contacts are provided by residues Thr-66, 67 to 69 (GMT), Ser-100, and Asn-128. 100–102 (SQR) is a binding site for substrate. Gln-167 contacts substrate. Glu-168 serves as a coordination point for Mg(2+). FMN-binding positions include Lys-199, Ser-224, Thr-229, 278–280 (GMR), and 299–300 (AL).

This sequence belongs to the IPP isomerase type 2 family. As to quaternary structure, homooctamer. Dimer of tetramers. The cofactor is FMN. NADPH serves as cofactor. Mg(2+) is required as a cofactor.

It localises to the cytoplasm. The enzyme catalyses isopentenyl diphosphate = dimethylallyl diphosphate. Involved in the biosynthesis of isoprenoids. Catalyzes the 1,3-allylic rearrangement of the homoallylic substrate isopentenyl (IPP) to its allylic isomer, dimethylallyl diphosphate (DMAPP). The polypeptide is Isopentenyl-diphosphate delta-isomerase (Pyrococcus horikoshii (strain ATCC 700860 / DSM 12428 / JCM 9974 / NBRC 100139 / OT-3)).